Reading from the N-terminus, the 281-residue chain is Energy-coupling factor transporter ATP-binding protein EcfA1 (281 aa).

The ABC transporter domain occupies 7–242 (IAAEDITFRY…NQDLIKIGLD (236 aa)). 42 to 49 (GHNGSGKS) is a binding site for ATP.

It belongs to the ABC transporter superfamily. Energy-coupling factor EcfA family. As to quaternary structure, forms a stable energy-coupling factor (ECF) transporter complex composed of 2 membrane-embedded substrate-binding proteins (S component), 2 ATP-binding proteins (A component) and 2 transmembrane proteins (T component).

Its subcellular location is the cell membrane. Functionally, ATP-binding (A) component of a common energy-coupling factor (ECF) ABC-transporter complex. Unlike classic ABC transporters this ECF transporter provides the energy necessary to transport a number of different substrates. This Bacillus licheniformis (strain ATCC 14580 / DSM 13 / JCM 2505 / CCUG 7422 / NBRC 12200 / NCIMB 9375 / NCTC 10341 / NRRL NRS-1264 / Gibson 46) protein is Energy-coupling factor transporter ATP-binding protein EcfA1.